A 527-amino-acid chain; its full sequence is G patch domain-containing protein 2 (527 aa).

Positions 35–135 (LEESSEQARG…RPSSNLSSSV (101 aa)) are disordered. Residues 62 to 76 (RQARKRRGRKRRSYN) show a composition bias toward basic residues. The span at 97 to 116 (EPSKDYREKHSNNKKDRSDS) shows a compositional bias: basic and acidic residues. 3 positions are modified to phosphoserine: Ser-114, Ser-116, and Ser-145. Disordered regions lie at residues 175 to 281 (SSKR…GDDE), 350 to 375 (TPSKNIKKSSGAPPSMLSAPGPGSNK), and 480 to 527 (TPGS…GNPA). Residues 186 to 196 (GCRDQDMDNDR) are compositionally biased toward basic and acidic residues. Residues 206 to 215 (KKVKKRKLKG) show a composition bias toward basic residues. Residues 231-257 (SEERSQPNKDRMEYEEQKASDELRSES) are compositionally biased toward basic and acidic residues. One can recognise a G-patch domain in the interval 466 to 512 (ESNIGNRMLQSMGWTPGSGLGRDGRGIAEPVQAVQRPKGLGLGFPLP). Over residues 510–527 (PLPKSSPTSPAPTSGNPA) the composition is skewed to low complexity.

In terms of assembly, interacts with DHX15.

The protein resides in the nucleus speckle. The protein localises to the nucleus. Its subcellular location is the nucleolus. Functionally, enhances the ATPase activity of DHX15 in vitro. This Mus musculus (Mouse) protein is G patch domain-containing protein 2 (Gpatch2).